A 453-amino-acid chain; its full sequence is tRNA modification GTPase MnmE (453 aa).

Positions 22, 79, and 119 each coordinate (6S)-5-formyl-5,6,7,8-tetrahydrofolate. The 162-residue stretch at 215-376 (GMKVVIAGRP…LRNHLKECMG (162 aa)) folds into the TrmE-type G domain. A K(+)-binding site is contributed by Asn225. GTP-binding positions include 225–230 (NAGKSS), 244–250 (TDIAGTT), 269–272 (DTAG), and 334–337 (NKAD). Ser229 serves as a coordination point for Mg(2+). Thr244, Ile246, and Thr249 together coordinate K(+). Position 250 (Thr250) interacts with Mg(2+). Lys453 is a (6S)-5-formyl-5,6,7,8-tetrahydrofolate binding site.

This sequence belongs to the TRAFAC class TrmE-Era-EngA-EngB-Septin-like GTPase superfamily. TrmE GTPase family. As to quaternary structure, homodimer. Heterotetramer of two MnmE and two MnmG subunits. K(+) serves as cofactor.

It is found in the cytoplasm. Exhibits a very high intrinsic GTPase hydrolysis rate. Involved in the addition of a carboxymethylaminomethyl (cmnm) group at the wobble position (U34) of certain tRNAs, forming tRNA-cmnm(5)s(2)U34. This chain is tRNA modification GTPase MnmE, found in Vibrio vulnificus (strain YJ016).